Reading from the N-terminus, the 894-residue chain is DNA mismatch repair protein MutS (894 aa).

629–636 contributes to the ATP binding site; that stretch reads GPNMGGKS. The interval 819–840 is disordered; it reads TPTPQLDLFAPPPHPDTSDDDE.

Belongs to the DNA mismatch repair MutS family.

Functionally, this protein is involved in the repair of mismatches in DNA. It is possible that it carries out the mismatch recognition step. This protein has a weak ATPase activity. This chain is DNA mismatch repair protein MutS, found in Cupriavidus pinatubonensis (strain JMP 134 / LMG 1197) (Cupriavidus necator (strain JMP 134)).